The chain runs to 695 residues: DNA ligase (695 aa).

Asp-30–Asp-34 is an NAD(+) binding site. A disordered region spans residues Thr-52–Arg-71. NAD(+) is bound by residues Ser-81–Leu-82 and Glu-106. Lys-108 acts as the N6-AMP-lysine intermediate in catalysis. NAD(+) contacts are provided by Arg-129, Glu-169, Lys-285, and Lys-309. Positions 403, 406, 422, and 428 each coordinate Zn(2+). One can recognise a BRCT domain in the interval Val-599–Thr-688. Positions Glu-676 to Asp-695 are disordered. Low complexity predominate over residues Ala-679 to Asp-695.

Belongs to the NAD-dependent DNA ligase family. LigA subfamily. The cofactor is Mg(2+). Requires Mn(2+) as cofactor.

The enzyme catalyses NAD(+) + (deoxyribonucleotide)n-3'-hydroxyl + 5'-phospho-(deoxyribonucleotide)m = (deoxyribonucleotide)n+m + AMP + beta-nicotinamide D-nucleotide.. Functionally, DNA ligase that catalyzes the formation of phosphodiester linkages between 5'-phosphoryl and 3'-hydroxyl groups in double-stranded DNA using NAD as a coenzyme and as the energy source for the reaction. It is essential for DNA replication and repair of damaged DNA. The chain is DNA ligase from Corynebacterium jeikeium (strain K411).